Here is a 438-residue protein sequence, read N- to C-terminus: RING finger protein 150 (438 aa).

The N-terminal stretch at 1-34 (MAMSLIQACCSLALSTWLLSFCFVHLLCLDFTVA) is a signal peptide. Over 35-208 (EKEEWYTAFV…NLQKYVSRTS (174 aa)) the chain is Extracellular. Asparagine 45, asparagine 125, asparagine 153, and asparagine 186 each carry an N-linked (GlcNAc...) asparagine glycan. The PA domain maps to 81-183 (SPKQDARGEV…PKGKEIVSLL (103 aa)). The helical transmembrane segment at 209–229 (VVFVSISFIVLMIISLAWLVF) threads the bilayer. The Cytoplasmic segment spans residues 230–438 (YYIQRFRYAN…TDQDCEEVKS (209 aa)). The RING-type; atypical zinc finger occupies 278-319 (CAVCIEGYKPNDVVRILPCRHLFHKSCVDPWLLDHRTCPMCK).

It localises to the membrane. This is RING finger protein 150 (RNF150) from Homo sapiens (Human).